A 281-amino-acid chain; its full sequence is Orotidine 5'-phosphate decarboxylase (281 aa).

Residue K94 is the Proton donor of the active site.

Belongs to the OMP decarboxylase family. Type 2 subfamily.

The catalysed reaction is orotidine 5'-phosphate + H(+) = UMP + CO2. It functions in the pathway pyrimidine metabolism; UMP biosynthesis via de novo pathway; UMP from orotate: step 2/2. This is Orotidine 5'-phosphate decarboxylase from Thermomicrobium roseum (strain ATCC 27502 / DSM 5159 / P-2).